Here is a 103-residue protein sequence, read N- to C-terminus: Large ribosomal subunit protein eL14 (103 aa).

The protein belongs to the eukaryotic ribosomal protein eL14 family.

The sequence is that of Large ribosomal subunit protein eL14 from Ignicoccus hospitalis (strain KIN4/I / DSM 18386 / JCM 14125).